The chain runs to 445 residues: Signal recognition particle 54 kDa protein (445 aa).

GTP-binding positions include 106 to 113, 186 to 190, and 244 to 247; these read GLQGSGKT, DTAGR, and TKLD.

It belongs to the GTP-binding SRP family. SRP54 subfamily. Part of the signal recognition particle protein translocation system, which is composed of SRP and FtsY. Archaeal SRP consists of a 7S RNA molecule of 300 nucleotides and two protein subunits: SRP54 and SRP19.

It is found in the cytoplasm. The catalysed reaction is GTP + H2O = GDP + phosphate + H(+). Involved in targeting and insertion of nascent membrane proteins into the cytoplasmic membrane. Binds to the hydrophobic signal sequence of the ribosome-nascent chain (RNC) as it emerges from the ribosomes. The SRP-RNC complex is then targeted to the cytoplasmic membrane where it interacts with the SRP receptor FtsY. This is Signal recognition particle 54 kDa protein from Methanobrevibacter smithii (strain ATCC 35061 / DSM 861 / OCM 144 / PS).